Reading from the N-terminus, the 306-residue chain is Ribosomal protein L11 methyltransferase (306 aa).

4 residues coordinate S-adenosyl-L-methionine: Thr-139, Gly-173, Asp-195, and Asn-242.

This sequence belongs to the methyltransferase superfamily. PrmA family.

It localises to the cytoplasm. It catalyses the reaction L-lysyl-[protein] + 3 S-adenosyl-L-methionine = N(6),N(6),N(6)-trimethyl-L-lysyl-[protein] + 3 S-adenosyl-L-homocysteine + 3 H(+). In terms of biological role, methylates ribosomal protein L11. The chain is Ribosomal protein L11 methyltransferase from Trichormus variabilis (strain ATCC 29413 / PCC 7937) (Anabaena variabilis).